Reading from the N-terminus, the 707-residue chain is Polyribonucleotide nucleotidyltransferase (707 aa).

Asp-488 and Asp-494 together coordinate Mg(2+). Positions 554-613 constitute a KH domain; the sequence is PRLFTMKINQDKIREVIGKGGETIRSITAETGTEINIAEDGTITIAATTQEAGDAAKKRI. Positions 623 to 693 constitute an S1 motif domain; that stretch reads GKVYEGTVVK…DRGRVRLSIK (71 aa).

The protein belongs to the polyribonucleotide nucleotidyltransferase family. Requires Mg(2+) as cofactor.

It is found in the cytoplasm. It catalyses the reaction RNA(n+1) + phosphate = RNA(n) + a ribonucleoside 5'-diphosphate. Its function is as follows. Involved in mRNA degradation. Catalyzes the phosphorolysis of single-stranded polyribonucleotides processively in the 3'- to 5'-direction. The sequence is that of Polyribonucleotide nucleotidyltransferase from Neisseria meningitidis serogroup B (strain ATCC BAA-335 / MC58).